The primary structure comprises 89 residues: Small ribosomal subunit protein uS15 (89 aa).

The protein belongs to the universal ribosomal protein uS15 family. Part of the 30S ribosomal subunit. Forms a bridge to the 50S subunit in the 70S ribosome, contacting the 23S rRNA.

Functionally, one of the primary rRNA binding proteins, it binds directly to 16S rRNA where it helps nucleate assembly of the platform of the 30S subunit by binding and bridging several RNA helices of the 16S rRNA. In terms of biological role, forms an intersubunit bridge (bridge B4) with the 23S rRNA of the 50S subunit in the ribosome. The polypeptide is Small ribosomal subunit protein uS15 (Nostoc punctiforme (strain ATCC 29133 / PCC 73102)).